Consider the following 1936-residue polypeptide: Trinucleotide repeat-containing gene 6C protein (1936 aa).

The span at 1-31 (MEEKKKKKQEEKKKKEGAQKKAADQKTKVPE) shows a compositional bias: basic and acidic residues. Disordered regions lie at residues 1–160 (MEEK…PTYR), 181–256 (PSIT…NSNG), 366–412 (PQES…AMQT), 439–931 (NGSS…IRRK), 961–1063 (VIQS…VAFG), and 1115–1139 (ESTS…KTSG). The segment covering 34–44 (KTCSSQPQPAG) has biased composition (polar residues). The segment covering 45-57 (TSTSTSTSTISSS) has biased composition (low complexity). A compositionally biased stretch (polar residues) spans 58-71 (NNGKRASASGQQPA). Positions 76 to 88 (LPREVPPRFRQQE) are enriched in basic and acidic residues. Polar residues-rich tracts occupy residues 100 to 111 (PTGTLTSVSPTQ) and 183 to 217 (ITGT…GSAQ). The sufficient for interaction with argonaute family proteins stretch occupies residues 211-1133 (MATGSAQGNF…GNAPKKGLQK (923 aa)). Positions 218–235 (GNFTGHTKKTNGNNGTNG) are enriched in low complexity. The span at 366 to 393 (PQESTEPQTSTSQNVSFSAQPQNLNTDG) shows a compositional bias: polar residues. 3 stretches are compositionally biased toward low complexity: residues 394-408 (PNNT…NPIN), 439-453 (NGSS…SAEG), and 469-480 (GNSNSGFSQGNG). Over residues 481-498 (DTVNSALSAKQNGSSSAV) the composition is skewed to polar residues. An Omega-N-methylarginine modification is found at Arg-523. The segment covering 572-585 (GWESPSVTSQNPTV) has biased composition (polar residues). A compositionally biased stretch (low complexity) spans 594–614 (SWAKAASSGTTASEGSSDGSG). Over residues 625-636 (GTGEGRRRDKGI) the composition is skewed to basic and acidic residues. A compositionally biased stretch (polar residues) spans 654 to 669 (LSNTGWGQTPVKQNTA). Residues 674-684 (ESPRSERKNDN) are compositionally biased toward basic and acidic residues. Position 675 is a phosphoserine (Ser-675). The segment covering 694 to 718 (TQASNSGGKNDGSIMNSTNTSSVSG) has biased composition (polar residues). Composition is skewed to low complexity over residues 720-730 (VNAPPAAVPAN) and 750-772 (SISS…SGAA). Composition is skewed to polar residues over residues 834–866 (NRSG…TNWG) and 873–888 (PQQN…NVSN). Ser-924 bears the Phosphoserine mark. Positions 964–982 (SSTTTNTTTTTTTTTSNTT) are enriched in low complexity. Thr-987 carries the post-translational modification Phosphothreonine. A compositionally biased stretch (polar residues) spans 1021-1035 (ENSWGEPSSPSTLVD). Residues 1140–1185 (KQDEAWIMSRLIKQLTDMGFPREPAEEALKSNNMNLDQAMSALLEK) enclose the UBA domain. Ser-1218 carries the phosphoserine modification. Disordered regions lie at residues 1291–1312 (AAQA…NSSQ), 1419–1658 (VKQP…PSSS), 1689–1732 (STWS…PSST), and 1848–1869 (TSSW…GSSH). A coiled-coil region spans residues 1388 to 1419 (MRQQEQQVARTITNLQQQIQQHQRQLAQALLV). Residues 1421 to 1430 (QPPPPPPPPH) are compositionally biased toward pro residues. A silencing domain; interaction with CNOT1 and PAN3 region spans residues 1467-1936 (NTFAPYPLAG…PGDLLSGESL (470 aa)). Residues 1496–1515 (DPSQSQSRLPQWTHPNSMDN) show a composition bias toward polar residues. A required for interaction with PABPC1 region spans residues 1578–1624 (KSDSDKISNGSSINWPPEFHPGVPWKGLQNIDPENDPDVTPGSVPTG). A sufficient for translational repression when tethered to a target mRNA region spans residues 1578 to 1936 (KSDSDKISNG…PGDLLSGESL (359 aa)). Residues 1588–1606 (SSINWPPEFHPGVPWKGLQ) form a PABPC1-interacting motif-2 (PAM2) region. A compositionally biased stretch (polar residues) spans 1623-1633 (TGPTINTTIQD). Low complexity predominate over residues 1641–1658 (SGGSSPPSSQNATLPSSS). Residues 1689-1703 (STWSSGPTSHTQASL) show a composition bias toward polar residues. The RRM domain occupies 1811-1878 (AQKSLHMCVL…HGLVRSDAGH (68 aa)). An interaction with the CCR4-NOT complex region spans residues 1842–1936 (GQALPPTSSW…PGDLLSGESL (95 aa)). Residues 1848-1865 (TSSWQSSSASSQPRLSAA) show a composition bias toward low complexity.

Belongs to the GW182 family. As to quaternary structure, interacts with one or more of the argonaute family proteins AGO1, AGO2, AGO3 and AGO4. Interacts with PABPC1 and EIF4G1. Interacts with CNOT1; the interaction is direct and mediates the association with the CCR4-NOT complex. Interacts with PAN3; the interaction mediates the association with the PAN complex.

In terms of biological role, plays a role in RNA-mediated gene silencing by micro-RNAs (miRNAs). Required for miRNA-dependent translational repression of complementary mRNAs by argonaute family proteins. As scaffoldng protein associates with argonaute proteins bound to partially complementary mRNAs and simultaneously can recruit CCR4-NOT and PAN deadenylase complexes. The chain is Trinucleotide repeat-containing gene 6C protein (TNRC6C) from Homo sapiens (Human).